Reading from the N-terminus, the 186-residue chain is LIM domain-containing protein DDB_G0271356 (186 aa).

3 LIM zinc-binding domains span residues 7-67 (PECY…DKFA), 68-127 (PKCQ…KIGF), and 128-186 (LCRH…KLYG).

The polypeptide is LIM domain-containing protein DDB_G0271356 (Dictyostelium discoideum (Social amoeba)).